Here is a 267-residue protein sequence, read N- to C-terminus: tRNA pseudouridine synthase A (267 aa).

Aspartate 54 serves as the catalytic Nucleophile. Tyrosine 114 contacts substrate.

The protein belongs to the tRNA pseudouridine synthase TruA family. As to quaternary structure, homodimer.

It catalyses the reaction uridine(38/39/40) in tRNA = pseudouridine(38/39/40) in tRNA. Its function is as follows. Formation of pseudouridine at positions 38, 39 and 40 in the anticodon stem and loop of transfer RNAs. This Tropheryma whipplei (strain TW08/27) (Whipple's bacillus) protein is tRNA pseudouridine synthase A.